We begin with the raw amino-acid sequence, 604 residues long: Prostaglandin G/H synthase 2 (604 aa).

Residues 1–17 form the signal peptide; the sequence is MLARALLLCAVLALSHT. Residues 18–55 form the EGF-like domain; sequence ANPCCSHPCQNRGVCMSVGFDQYKCDCTRTGFYGENCS. Intrachain disulfides connect Cys-21-Cys-32, Cys-22-Cys-145, Cys-26-Cys-42, and Cys-44-Cys-54. Asn-53 carries N-linked (GlcNAc...) asparagine glycosylation. Arg-106 serves as a coordination point for substrate. Asn-130 is a glycosylation site (N-linked (GlcNAc...) asparagine). The Proton acceptor role is filled by His-193. Substrate is bound at residue Tyr-341. Residue Tyr-371 is the For cyclooxygenase activity of the active site. Residue His-374 participates in heme b binding. An N-linked (GlcNAc...) asparagine glycan is attached at Asn-396. At Cys-526 the chain carries S-nitrosocysteine. A disulfide bond links Cys-555 and Cys-561. At Ser-565 the chain carries O-acetylserine. Asn-580 carries an N-linked (GlcNAc...) asparagine glycan.

Belongs to the prostaglandin G/H synthase family. In terms of assembly, homodimer. Requires heme b as cofactor. S-nitrosylation by NOS2 (iNOS) activates enzyme activity. S-nitrosylation may take place on different Cys residues in addition to Cys-526. In terms of processing, acetylated at Ser-565 by SPHK1. During neuroinflammation, acetylation by SPHK1 promotes neuronal secretion of specialized preresolving mediators (SPMs), especially 15-R-lipoxin A4, which results in an increase of phagocytic microglia.

Its subcellular location is the microsome membrane. The protein resides in the endoplasmic reticulum membrane. It is found in the nucleus inner membrane. The protein localises to the nucleus outer membrane. It carries out the reaction (5Z,8Z,11Z,14Z)-eicosatetraenoate + AH2 + 2 O2 = prostaglandin H2 + A + H2O. It catalyses the reaction (5Z,8Z,11Z,14Z)-eicosatetraenoate + 2 O2 = prostaglandin G2. The enzyme catalyses prostaglandin G2 + AH2 = prostaglandin H2 + A + H2O. The catalysed reaction is (5Z,8Z,11Z,14Z,17Z)-eicosapentaenoate + 2 O2 = prostaglandin G3. It carries out the reaction prostaglandin G3 + AH2 = prostaglandin H3 + A + H2O. It catalyses the reaction (8Z,11Z,14Z)-eicosatrienoate + 2 O2 = prostaglandin G1. The enzyme catalyses prostaglandin G1 + AH2 = prostaglandin H1 + A + H2O. The catalysed reaction is 2-(5Z,8Z,11Z,14Z)-eicosatetraenoyl-sn-glycero-3-phosphoethanolamine + 2 O2 = 2-(prostaglandin G2)-sn-glycero-3-phosphoethanolamine. It carries out the reaction 2-(prostaglandin G2)-sn-glycero-3-phosphoethanolamine + AH2 = 2-(prostaglandin H2)-sn-glycero-3-phosphoethanolamine + A + H2O. It catalyses the reaction 2-(5Z,8Z,11Z,14Z)-eicosatetraenoyl-sn-glycero-3-phosphocholine + 2 O2 = 2-(prostaglandin G2)-sn-glycero-3-phosphocholine. The enzyme catalyses 2-(prostaglandin G2)-sn-glycero-3-phosphocholine + AH2 = 2-(prostaglandin H2)-sn-glycero-3-phosphocholine + A + H2O. The catalysed reaction is (15S)-hydroperoxy-(5Z,8Z,11Z,13E)-eicosatetraenoate + AH2 = (15S)-hydroxy-(5Z,8Z,11Z,13E)-eicosatetraenoate + A + H2O. It carries out the reaction 2-(5Z,8Z,11Z,14Z)-eicosatetraenoyl-sn-glycero-3-phosphocholine + AH2 + O2 = 2-[(15S)-hydroxy-(5Z,8Z,11Z,13E)-eicosatetraenoyl]-sn-glycero-3-phosphocholine + A + H2O. It catalyses the reaction 2-(5Z,8Z,11Z,14Z)-eicosatetraenoyl-sn-glycero-3-phosphocholine + AH2 + O2 = 2-[(15R)-hydroxy-(5Z,8Z,11Z,13E)-eicosatetraenoyl]-sn-glycero-3-phosphocholine + A + H2O. The enzyme catalyses 2-(5Z,8Z,11Z,14Z)-eicosatetraenoyl-sn-glycero-3-phosphocholine + AH2 + O2 = 2-[(11R)-hydroxy-(5Z,8Z,12E,14Z)-eicosatetraenoyl]-sn-glycero-3-phosphocholine + A + H2O. The catalysed reaction is (9Z,12Z)-octadecadienoate + AH2 + O2 = 9-hydroxy-(10E,12Z)-octadecadienoate + A + H2O. It carries out the reaction (9Z,12Z)-octadecadienoate + AH2 + O2 = 13-hydroxy-(9Z,11E)-octadecadienoate + A + H2O. It catalyses the reaction (5Z,8Z,11Z,14Z)-eicosatetraenoate + AH2 + O2 = (15R)-hydroxy-(5Z,8Z,11Z,13E)-eicosatetraenoate + A + H2O. The enzyme catalyses (5Z,8Z,11Z,14Z)-eicosatetraenoate + AH2 + O2 = (11R)-hydroxy-(5Z,8Z,12E,14Z)-eicosatetraenoate + A + H2O. The catalysed reaction is (5Z,8Z,11Z,14Z,17Z)-eicosapentaenoate + AH2 + O2 = (11R)-hydroxy-(5Z,8Z,12E,14Z,17Z)-eicosapentaenoate + A + H2O. It carries out the reaction (5Z,8Z,11Z,14Z,17Z)-eicosapentaenoate + AH2 + O2 = (18S)-hydroxy-(5Z,8Z,11Z,14Z,16E)-eicosapentaenoate + A + H2O. It catalyses the reaction (5Z,8Z,11Z,14Z,17Z)-eicosapentaenoate + AH2 + O2 = (18R)-hydroxy-(5Z,8Z,11Z,14Z,16E)-eicosapentaenoate + A + H2O. The enzyme catalyses (5Z,8Z,11Z,14Z,17Z)-eicosapentaenoate + AH2 + O2 = (15R)-hydroxy-(5Z,8Z,11Z,13E,17Z)-eicosapentaenoate + A + H2O. The catalysed reaction is (5Z,8Z,11Z,14Z,17Z)-eicosapentaenoate + AH2 + O2 = (15S)-hydroxy-(5Z,8Z,11Z,13E,17Z)-eicosapentaenoate + A + H2O. It carries out the reaction (7Z,10Z,13Z,16Z,19Z)-docosapentaenoate + AH2 + O2 = 13R-hydroxy-(7Z,10Z,14E,16Z,19Z)-docosapentaenoate + A + H2O. It catalyses the reaction (4Z,7Z,10Z,13Z,16Z,19Z)-docosahexaenoate + AH2 + O2 = 13-hydroxy-(4Z,7Z,10Z,14E,16Z,19Z)-docosahexaenoate + A + H2O. The enzyme catalyses (5S)-hydroxy-(6E,8Z,11Z,14Z)-eicosatetraenoate + AH2 + O2 = (5S,15R)-dihydroxy-(6E,8Z,11Z,13E)-eicosatetraenoate + A + H2O. The catalysed reaction is (4Z,7Z,10Z,13Z,16Z,19Z)-docosahexaenoate + AH2 + O2 = 17R-hydroxy-(4Z,7Z,10Z,13Z,15E,19Z)-docosahexaenoate + A + H2O. It carries out the reaction (5S)-hydroxy-(6E,8Z,11Z,14Z)-eicosatetraenoate + AH2 + O2 = (5S,15S)-dihydroxy-(6E,8Z,11Z,13E)-eicosatetraenoate + A + H2O. It catalyses the reaction (5S)-hydroxy-(6E,8Z,11Z,14Z)-eicosatetraenoate + AH2 + O2 = (5S,11R)-dihydroxy-(6E,8Z,12E,14Z)-eicosatetraenoate + A + H2O. The enzyme catalyses 2-(5Z,8Z,11Z,14Z-eicosatetraenoyl)-glycerol + 2 O2 = 2-glyceryl-prostaglandin G2. The catalysed reaction is 2-glyceryl-prostaglandin G2 + AH2 = 2-glyceryl-prostaglandin H2 + A + H2O. It carries out the reaction (5Z,8Z,11Z,14Z)-eicosatetraenoate + O2 = (15R)-hydroperoxy-(5Z,8Z,11Z,13E)-eicosatetraenoate. It catalyses the reaction (5Z,8Z,11Z,14Z)-eicosatetraenoate + O2 = 11R-hydroperoxy-(5Z,8Z,12E,14Z)-eicosatetraenoate. The enzyme catalyses (9Z,12Z)-octadecadienoate + AH2 + O2 = (9R)-hydroxy-(10E,12Z)-octadecadienoate + A + H2O. The catalysed reaction is (9Z,12Z)-octadecadienoate + AH2 + O2 = (9S)-hydroxy-(10E,12Z)-octadecadienoate + A + H2O. It carries out the reaction (9Z,12Z)-octadecadienoate + AH2 + O2 = (13S)-hydroxy-(9Z,11E)-octadecadienoate + A + H2O. It catalyses the reaction (9Z,12Z)-octadecadienoate + AH2 + O2 = (13R)-hydroxy-(9Z,11E)-octadecadienoate + A + H2O. It functions in the pathway lipid metabolism; prostaglandin biosynthesis. With respect to regulation, the cyclooxygenase activity is inhibited by nonsteroidal anti-inflammatory drugs (NSAIDs) including aspirin, ibuprofen, flurbiprofen, celecoxib, flufenamic, mefenamic and tolfenamic acids as well as by hydroperoxide scavenger erythrocyte glutathione peroxidase GPX1. Aspirin triggers enzyme acetylation turning off its ability to generate pro-inflammatory prostaglandins, but switches on its capacity to produce anti-inflammatory lipid mediators involved in inflammation resolution. Aspirin enhances lipoxygenase-type activity toward production of epimers with R stereochemistry such as 15R-HETE, 18R-HEPE, 15R-HEPE and 17R-HDHA. Atorvastatin, a cholesterol-lowering drug, triggers enzyme S-nitrosylation increasing production of 13-series resolvins (RvTs). In terms of biological role, dual cyclooxygenase and peroxidase in the biosynthesis pathway of prostanoids, a class of C20 oxylipins mainly derived from arachidonate ((5Z,8Z,11Z,14Z)-eicosatetraenoate, AA, C20:4(n-6)), with a particular role in the inflammatory response. The cyclooxygenase activity oxygenates AA to the hydroperoxy endoperoxide prostaglandin G2 (PGG2), and the peroxidase activity reduces PGG2 to the hydroxy endoperoxide prostaglandin H2 (PGH2), the precursor of all 2-series prostaglandins and thromboxanes. This complex transformation is initiated by abstraction of hydrogen at carbon 13 (with S-stereochemistry), followed by insertion of molecular O2 to form the endoperoxide bridge between carbon 9 and 11 that defines prostaglandins. The insertion of a second molecule of O2 (bis-oxygenase activity) yields a hydroperoxy group in PGG2 that is then reduced to PGH2 by two electrons. Similarly catalyzes successive cyclooxygenation and peroxidation of dihomo-gamma-linoleate (DGLA, C20:3(n-6)) and eicosapentaenoate (EPA, C20:5(n-3)) to corresponding PGH1 and PGH3, the precursors of 1- and 3-series prostaglandins. In an alternative pathway of prostanoid biosynthesis, converts 2-arachidonoyl lysophopholipids to prostanoid lysophopholipids, which are then hydrolyzed by intracellular phospholipases to release free prostanoids. Metabolizes 2-arachidonoyl glycerol yielding the glyceryl ester of PGH2, a process that can contribute to pain response. Generates lipid mediators from n-3 and n-6 polyunsaturated fatty acids (PUFAs) via a lipoxygenase-type mechanism. Oxygenates PUFAs to hydroperoxy compounds and then reduces them to corresponding alcohols. Plays a role in the generation of resolution phase interaction products (resolvins) during both sterile and infectious inflammation. Metabolizes docosahexaenoate (DHA, C22:6(n-3)) to 17R-HDHA, a precursor of the D-series resolvins (RvDs). As a component of the biosynthetic pathway of E-series resolvins (RvEs), converts eicosapentaenoate (EPA, C20:5(n-3)) primarily to 18S-HEPE that is further metabolized by ALOX5 and LTA4H to generate 18S-RvE1 and 18S-RvE2. In vascular endothelial cells, converts docosapentaenoate (DPA, C22:5(n-3)) to 13R-HDPA, a precursor for 13-series resolvins (RvTs) shown to activate macrophage phagocytosis during bacterial infection. In activated leukocytes, contributes to oxygenation of hydroxyeicosatetraenoates (HETE) to diHETES (5,15-diHETE and 5,11-diHETE). Can also use linoleate (LA, (9Z,12Z)-octadecadienoate, C18:2(n-6)) as substrate and produce hydroxyoctadecadienoates (HODEs) in a regio- and stereospecific manner, being (9R)-HODE ((9R)-hydroxy-(10E,12Z)-octadecadienoate) and (13S)-HODE ((13S)-hydroxy-(9Z,11E)-octadecadienoate) its major products. During neuroinflammation, plays a role in neuronal secretion of specialized preresolving mediators (SPMs) 15R-lipoxin A4 that regulates phagocytic microglia. The sequence is that of Prostaglandin G/H synthase 2 from Homo sapiens (Human).